Reading from the N-terminus, the 86-residue chain is MKTLLLALAVVAFMCLDSVYPLNCFQCNRETWWKCSEAKRCRLGNKCYNLYNSDGKWTVKGCAQTCPTAGPDERVKCCYISECNRY.

A signal peptide spans 1–21 (MKTLLLALAVVAFMCLDSVYP). 5 disulfides stabilise this stretch: Cys24-Cys47, Cys27-Cys35, Cys41-Cys62, Cys66-Cys77, and Cys78-Cys83.

It belongs to the three-finger toxin family. Ancestral subfamily. Boigatoxin sub-subfamily. Monomer. As to expression, expressed by the venom gland.

Its subcellular location is the secreted. Functionally, probable neurotoxin. Is not toxic to mice and geckos. The protein is Sulmotoxin 2 of Spilotes sulphureus (Amazon puffing snake).